The sequence spans 259 residues: Deoxyribose-phosphate aldolase (259 aa).

Asp102 functions as the Proton donor/acceptor in the catalytic mechanism. Catalysis depends on Lys167, which acts as the Schiff-base intermediate with acetaldehyde. Lys201 (proton donor/acceptor) is an active-site residue.

This sequence belongs to the DeoC/FbaB aldolase family. DeoC type 2 subfamily.

Its subcellular location is the cytoplasm. It carries out the reaction 2-deoxy-D-ribose 5-phosphate = D-glyceraldehyde 3-phosphate + acetaldehyde. Its pathway is carbohydrate degradation; 2-deoxy-D-ribose 1-phosphate degradation; D-glyceraldehyde 3-phosphate and acetaldehyde from 2-deoxy-alpha-D-ribose 1-phosphate: step 2/2. Functionally, catalyzes a reversible aldol reaction between acetaldehyde and D-glyceraldehyde 3-phosphate to generate 2-deoxy-D-ribose 5-phosphate. This chain is Deoxyribose-phosphate aldolase, found in Enterobacter sp. (strain 638).